The primary structure comprises 42 residues: MQDVKTYLSTAPVLAAIWFGILAGLLIEINRFFPDALVLPYV.

The chain crosses the membrane as a helical span at residues 7 to 27; that stretch reads YLSTAPVLAAIWFGILAGLLI.

It belongs to the PsaJ family.

It localises to the plastid. It is found in the chloroplast thylakoid membrane. May help in the organization of the PsaE and PsaF subunits. This chain is Photosystem I reaction center subunit IX, found in Staurastrum punctulatum (Green alga).